Here is a 689-residue protein sequence, read N- to C-terminus: Small ribosomal subunit protein mS39 (689 aa).

The transit peptide at 1 to 37 (MAVVSAVRWLGLRSRLGQPLTGRRAGLCEQARSCRFY) directs the protein to the mitochondrion. At Lys126 the chain carries N6-acetyllysine. PPR repeat units lie at residues 149 to 183 (IKDI…GTTV), 184 to 219 (SLET…EALE), 255 to 289 (NEHS…RLHA), 290 to 330 (DVYT…KVKP), 331 to 367 (NLQT…GIEP), 368 to 409 (SLAT…SPKD), 412 to 446 (DDKF…DNWK), 454 to 488 (RNFY…AYFP), 489 to 523 (HSQT…GHTF), and 572 to 606 (PATS…NKIP). Residues 665 to 689 (NLTALTSDSDTDSSSDSDSDTSEGK) form a disordered region. Positions 673–689 (SDTDSSSDSDSDTSEGK) are enriched in acidic residues.

The protein belongs to the mitochondrion-specific ribosomal protein mS39 family. As to quaternary structure, component of the mitochondrial small ribosomal subunit (mt-SSU). Mature mammalian 55S mitochondrial ribosomes consist of a small (28S) and a large (39S) subunit. The 28S small subunit contains a 12S ribosomal RNA (12S mt-rRNA) and 30 different proteins. The 39S large subunit contains a 16S rRNA (16S mt-rRNA), a copy of mitochondrial valine transfer RNA (mt-tRNA(Val)), which plays an integral structural role, and 52 different proteins. Associated with the 12S mitochondrial rRNA (12S mt-rRNA). In terms of tissue distribution, abundant in testes, skeletal muscle and heart tissue.

The protein resides in the mitochondrion. In terms of biological role, mitochondrial RNA-binding protein that has a role in mitochondrial translation. The chain is Small ribosomal subunit protein mS39 (PTCD3) from Homo sapiens (Human).